The chain runs to 416 residues: Multifunctional CCA protein (416 aa).

Residues glycine 8 and arginine 11 each coordinate ATP. Glycine 8 and arginine 11 together coordinate CTP. Residues aspartate 21 and aspartate 23 each contribute to the Mg(2+) site. The ATP site is built by arginine 91, arginine 138, and arginine 141. 3 residues coordinate CTP: arginine 91, arginine 138, and arginine 141. The HD domain maps to 229–331; it reads TGLHQELVSD…YELLQRCDAF (103 aa).

The protein belongs to the tRNA nucleotidyltransferase/poly(A) polymerase family. Bacterial CCA-adding enzyme type 1 subfamily. As to quaternary structure, monomer. Can also form homodimers and oligomers. Mg(2+) is required as a cofactor. The cofactor is Ni(2+).

It carries out the reaction a tRNA precursor + 2 CTP + ATP = a tRNA with a 3' CCA end + 3 diphosphate. The enzyme catalyses a tRNA with a 3' CCA end + 2 CTP + ATP = a tRNA with a 3' CCACCA end + 3 diphosphate. Its function is as follows. Catalyzes the addition and repair of the essential 3'-terminal CCA sequence in tRNAs without using a nucleic acid template. Adds these three nucleotides in the order of C, C, and A to the tRNA nucleotide-73, using CTP and ATP as substrates and producing inorganic pyrophosphate. tRNA 3'-terminal CCA addition is required both for tRNA processing and repair. Also involved in tRNA surveillance by mediating tandem CCA addition to generate a CCACCA at the 3' terminus of unstable tRNAs. While stable tRNAs receive only 3'-terminal CCA, unstable tRNAs are marked with CCACCA and rapidly degraded. The chain is Multifunctional CCA protein from Xylella fastidiosa (strain M12).